Here is a 326-residue protein sequence, read N- to C-terminus: GTPase Obg (326 aa).

Positions 1–159 (MKFVDSAKIY…LEIELELKLM (159 aa)) constitute an Obg domain. Residues 119–138 (EGGKGGKGNPHFASSTRQAP) are disordered. The region spanning 160–323 (ADVGLVGFPN…LKDELWSRVK (164 aa)) is the OBG-type G domain. GTP is bound by residues 166 to 173 (GFPNAGKS), 191 to 195 (FTTLV), 213 to 216 (DIPG), 280 to 283 (TKMD), and 304 to 306 (SSV). Mg(2+) contacts are provided by S173 and T193.

The protein belongs to the TRAFAC class OBG-HflX-like GTPase superfamily. OBG GTPase family. In terms of assembly, monomer. Mg(2+) serves as cofactor.

The protein localises to the cytoplasm. Its function is as follows. An essential GTPase which binds GTP, GDP and possibly (p)ppGpp with moderate affinity, with high nucleotide exchange rates and a fairly low GTP hydrolysis rate. Plays a role in control of the cell cycle, stress response, ribosome biogenesis and in those bacteria that undergo differentiation, in morphogenesis control. This chain is GTPase Obg, found in Chlorobium phaeobacteroides (strain BS1).